The primary structure comprises 245 residues: tRNA pseudouridine synthase A 2 (245 aa).

The active-site Nucleophile is the aspartate 53. Tyrosine 111 is a binding site for substrate.

It belongs to the tRNA pseudouridine synthase TruA family. As to quaternary structure, homodimer.

It carries out the reaction uridine(38/39/40) in tRNA = pseudouridine(38/39/40) in tRNA. Functionally, formation of pseudouridine at positions 38, 39 and 40 in the anticodon stem and loop of transfer RNAs. The polypeptide is tRNA pseudouridine synthase A 2 (Bacillus thuringiensis subsp. konkukian (strain 97-27)).